Here is a 113-residue protein sequence, read N- to C-terminus: Retrotransposon Gag-like protein 8B (113 aa).

This sequence belongs to the FAM127 family.

The chain is Retrotransposon Gag-like protein 8B (RTL8B) from Homo sapiens (Human).